The sequence spans 300 residues: Ornithine carbamoyltransferase (300 aa).

Carbamoyl phosphate contacts are provided by residues 51–54, Q78, R102, and 129–132; these read STRT and HPCQ. L-ornithine contacts are provided by residues N160, D217, and 221–222; that span reads SM. Residues 257-258 and R285 contribute to the carbamoyl phosphate site; that span reads CL.

It belongs to the aspartate/ornithine carbamoyltransferase superfamily. OTCase family.

The protein localises to the cytoplasm. The enzyme catalyses carbamoyl phosphate + L-ornithine = L-citrulline + phosphate + H(+). It functions in the pathway amino-acid biosynthesis; L-arginine biosynthesis; L-arginine from L-ornithine and carbamoyl phosphate: step 1/3. Functionally, reversibly catalyzes the transfer of the carbamoyl group from carbamoyl phosphate (CP) to the N(epsilon) atom of ornithine (ORN) to produce L-citrulline. The chain is Ornithine carbamoyltransferase from Halorhodospira halophila (strain DSM 244 / SL1) (Ectothiorhodospira halophila (strain DSM 244 / SL1)).